The sequence spans 552 residues: Non-structural protein NS1 (552 aa).

It belongs to the orbivirus non-structural protein NS1 family.

This is Non-structural protein NS1 (Segment-5) from Antilocapra americana (Pronghorn).